The sequence spans 536 residues: MIRTTFATAIAHFHTHSHGGAQARPLQNNTREVIHCPEAWLVKIVSTLFVYRVPDSDLCFCYLSKNLNPFISFEVVKKLDNNPHIGFRFWEFSRFKLNIRHSFWTYNLLTRSLCKAGLHDLAGQMFECMKSDGVSPNNRLLGFLVSSFAEKGKLHFATALLLQSFEVEGCCMVVNSLLNTLVKLDRVEDAMKLFDEHLRFQSCNDTKTFNILIRGLCGVGKAEKALELLGVMSGFGCEPDIVTYNTLIQGFCKSNELNKASEMFKDVKSGSVCSPDVVTYTSMISGYCKAGKMREASSLLDDMLRLGIYPTNVTFNVLVDGYAKAGEMLTAEEIRGKMISFGCFPDVVTFTSLIDGYCRVGQVSQGFRLWEEMNARGMFPNAFTYSILINALCNENRLLKARELLGQLASKDIIPQPFMYNPVIDGFCKAGKVNEANVIVEEMEKKKCKPDKITFTILIIGHCMKGRMFEAVSIFHKMVAIGCSPDKITVSSLLSCLLKAGMAKEAYHLNQIARKGQSNNVVPLETKTANATLAAC.

12 PPR repeats span residues 102–136, 137–167, 170–200, 205–239, 240–274, 276–310, 311–345, 346–380, 381–415, 416–450, 451–485, and 486–523; these read SFWTYNLLTRSLCKAGLHDLAGQMFECMKSDGVSP, NNRLLGFLVSSFAEKGKLHFATALLLQSFEV, CCMVVNSLLNTLVKLDRVEDAMKLFDEHLRF, DTKTFNILIRGLCGVGKAEKALELLGVMSGFGCEP, DIVTYNTLIQGFCKSNELNKASEMFKDVKSGSVCS, DVVTYTSMISGYCKAGKMREASSLLDDMLRLGIYP, TNVTFNVLVDGYAKAGEMLTAEEIRGKMISFGCFP, DVVTFTSLIDGYCRVGQVSQGFRLWEEMNARGMFP, NAFTYSILINALCNENRLLKARELLGQLASKDIIP, QPFMYNPVIDGFCKAGKVNEANVIVEEMEKKKCKP, DKITFTILIIGHCMKGRMFEAVSIFHKMVAIGCSP, and DKITVSSLLSCLLKAGMAKEAYHLNQIARKGQSNNVVP.

This sequence belongs to the PPR family. P subfamily.

This chain is Pentatricopeptide repeat-containing protein At2g06000, found in Arabidopsis thaliana (Mouse-ear cress).